Consider the following 284-residue polypeptide: MDAIKKKMQAMKLEKDNAMDRADTLEQQNKEANNRAEKTEEEIRATQKKMQQVENELDQAQEQLSAANTKLDEKEKALQNAEGEVAALNRRIQLLEEDLERSEERLNTATTKLAEASQAADESERMRKVLENRSLSDEERMDALENQLKEARFLAEEADRKYDEVARKLAMVEADLERAEERAESGESKIVELEEELRVVGNNLKSLEVSEEKANQREETYKEQIKTLANKLKAAEARAEFAERSVQKLQKEVDRLEDELVNEKEKYKSITDELDQTFSELSGY.

Residues 1-54 form a disordered region; it reads MDAIKKKMQAMKLEKDNAMDRADTLEQQNKEANNRAEKTEEEIRATQKKMQQVE. Positions 1 to 273 form a coiled coil; that stretch reads MDAIKKKMQA…KEKYKSITDE (273 aa). A compositionally biased stretch (basic and acidic residues) spans 12–45; that stretch reads KLEKDNAMDRADTLEQQNKEANNRAEKTEEEIRA.

The protein belongs to the tropomyosin family. As to quaternary structure, homodimer. In terms of tissue distribution, muscle (at protein level). Expressed in leg and chest protection muscle (at protein level). Expressed in claw muscle.

Tropomyosin, in association with the troponin complex, plays a central role in the calcium dependent regulation of muscle contraction. This is Tropomyosin from Eriocheir sinensis (Chinese mitten crab).